Here is a 500-residue protein sequence, read N- to C-terminus: Na(+)/H(+) antiporter NhaB (500 aa).

Transmembrane regions (helical) follow at residues H11 to L31, L34 to F54, M58 to L78, V96 to F116, I121 to F141, F145 to V165, L205 to P225, F241 to V261, I311 to I331, F350 to I370, M394 to I414, A450 to I470, and M477 to T497.

Belongs to the NhaB Na(+)/H(+) (TC 2.A.34) antiporter family.

It localises to the cell inner membrane. It carries out the reaction 2 Na(+)(in) + 3 H(+)(out) = 2 Na(+)(out) + 3 H(+)(in). Its function is as follows. Na(+)/H(+) antiporter that extrudes sodium in exchange for external protons. The protein is Na(+)/H(+) antiporter NhaB of Pseudomonas putida (strain ATCC 700007 / DSM 6899 / JCM 31910 / BCRC 17059 / LMG 24140 / F1).